A 97-amino-acid polypeptide reads, in one-letter code: Apolipoprotein C-II (97 aa).

The signal sequence occupies residues 1–22 (MGSRFFLALFLALLVLGNEVQG). Residues 63–71 (SVDEKLRDM) form a lipid binding region. The tract at residues 75-97 (SSAAMTTYAGIFTDQLLTLLKGE) is lipoprotein lipase cofactor.

This sequence belongs to the apolipoprotein C2 family. Post-translationally, proapolipoprotein C-II is synthesized as a sialic acid containing glycoprotein which is subsequently desialylated prior to its proteolytic processing. Proapolipoprotein C-II, the major form found in plasma undergoes proteolytic cleavage of its N-terminal hexapeptide to generate the mature form apolipoprotein C-II, which occurs as the minor form in plasma.

The protein resides in the secreted. Functionally, component of chylomicrons, very low-density lipoproteins (VLDL), low-density lipoproteins (LDL), and high-density lipoproteins (HDL) in plasma. Plays an important role in lipoprotein metabolism as an activator of lipoprotein lipase. The protein is Apolipoprotein C-II (Apoc2) of Rattus norvegicus (Rat).